The primary structure comprises 605 residues: FAD-linked oxidoreductase easE (605 aa).

Positions 1–20 (MRHFVTFVVGFLLSWGFLSS) are cleaved as a signal peptide. Residues N46 and N105 are each glycosylated (N-linked (GlcNAc...) asparagine). The 186-residue stretch at 122 to 307 (CHQGRLPLYS…TQATVRAFPD (186 aa)) folds into the FAD-binding PCMH-type domain. N-linked (GlcNAc...) asparagine glycosylation occurs at N370.

It belongs to the oxygen-dependent FAD-linked oxidoreductase family. The cofactor is FAD.

Its pathway is alkaloid biosynthesis; ergot alkaloid biosynthesis. FAD-linked oxidoreductase; part of the gene cluster that mediates the biosynthesis of fungal ergot alkaloid ergovaline, the predominant ergopeptine product in E.festucae var. lolii. DmaW catalyzes the first step of ergot alkaloid biosynthesis by condensing dimethylallyl diphosphate (DMAP) and tryptophan to form 4-dimethylallyl-L-tryptophan. The second step is catalyzed by the methyltransferase easF that methylates 4-dimethylallyl-L-tryptophan in the presence of S-adenosyl-L-methionine, resulting in the formation of 4-dimethylallyl-L-abrine. The catalase easC and the FAD-dependent oxidoreductase easE then transform 4-dimethylallyl-L-abrine to chanoclavine-I which is further oxidized by easD in the presence of NAD(+), resulting in the formation of chanoclavine-I aldehyde. Agroclavine dehydrogenase easG then mediates the conversion of chanoclavine-I aldehyde to agroclavine via a non-enzymatic adduct reaction: the substrate is an iminium intermediate that is formed spontaneously from chanoclavine-I aldehyde in the presence of glutathione. The presence of easA is not required to complete this reaction. Further conversion of agroclavine to paspalic acid is a two-step process involving oxidation of agroclavine to elymoclavine and of elymoclavine to paspalic acid, the second step being performed by the elymoclavine oxidase cloA. Paspalic acid is then further converted to D-lysergic acid. Ergovaline is assembled from D-lysergic acid and three different amino acids by the D-lysergyl-peptide-synthetase composed of a monomudular (lpsB) and a trimodular (lpsA) nonribosomal peptide synthetase subunit. This chain is FAD-linked oxidoreductase easE, found in Epichloe festucae var. lolii (Neotyphodium lolii).